The sequence spans 20 residues: Bulb protein (20 aa).

The tract at residues 1-20 (APDVHTRXTQNGLPPGXLPS) is disordered.

This chain is Bulb protein, found in Narcissus pseudonarcissus (Daffodil).